The following is a 341-amino-acid chain: HTH-type transcriptional repressor PurR (341 aa).

In terms of domain architecture, HTH lacI-type spans 2-56 (ATIKDVAKRANVSTTTVSHVINKTRFVAEETRNAVWAAIKELHYSPSAVARSLKV). A DNA-binding region (H-T-H motif) is located at residues 4-23 (IKDVAKRANVSTTTVSHVIN). A DNA-binding region spans residues 48–56 (SAVARSLKV). Tyrosine 73, arginine 190, threonine 192, phenylalanine 221, and aspartate 275 together coordinate hypoxanthine.

As to quaternary structure, homodimer.

It functions in the pathway purine metabolism; purine nucleotide biosynthesis [regulation]. Its function is as follows. Is the main repressor of the genes involved in the de novo synthesis of purine nucleotides, regulating purB, purC, purEK, purF, purHD, purL, purMN and guaBA expression. PurR is allosterically activated to bind its cognate DNA by binding the purine corepressors, hypoxanthine or guanine, thereby effecting transcription repression. The polypeptide is HTH-type transcriptional repressor PurR (Escherichia coli (strain UTI89 / UPEC)).